The following is a 373-amino-acid chain: 3 beta-hydroxysteroid dehydrogenase/Delta 5--&gt;4-isomerase type 2 (373 aa).

The active-site Proton acceptor is Tyr155. Lys159 provides a ligand contact to NAD(+). The helical transmembrane segment at 288 to 308 threads the bilayer; sequence VPLLYWLAFLLETVSFLLSPI.

Belongs to the 3-beta-HSD family. In terms of tissue distribution, liver and kidney.

Its subcellular location is the endoplasmic reticulum membrane. It is found in the mitochondrion membrane. It carries out the reaction a 3beta-hydroxy-Delta(5)-steroid + NAD(+) = a 3-oxo-Delta(5)-steroid + NADH + H(+). The enzyme catalyses a 3-oxo-Delta(5)-steroid = a 3-oxo-Delta(4)-steroid. The catalysed reaction is pregnenolone + NAD(+) = pregn-5-ene-3,20-dione + NADH + H(+). It catalyses the reaction pregn-5-ene-3,20-dione = progesterone. It carries out the reaction 3beta-hydroxyandrost-5-en-17-one + NAD(+) = androst-5-ene-3,17-dione + NADH + H(+). The enzyme catalyses androst-5-ene-3,17-dione = androst-4-ene-3,17-dione. It participates in lipid metabolism; steroid biosynthesis. In terms of biological role, 3-beta-HSD is a bifunctional enzyme, that catalyzes the oxidative conversion of Delta(5)-ene-3-beta-hydroxy steroid, and the oxidative conversion of ketosteroids. The 3-beta-HSD enzymatic system plays a crucial role in the biosynthesis of all classes of hormonal steroids. In Mus musculus (Mouse), this protein is 3 beta-hydroxysteroid dehydrogenase/Delta 5--&gt;4-isomerase type 2.